Consider the following 92-residue polypeptide: UPF0223 protein SSP1692 (92 aa).

This sequence belongs to the UPF0223 family.

This chain is UPF0223 protein SSP1692, found in Staphylococcus saprophyticus subsp. saprophyticus (strain ATCC 15305 / DSM 20229 / NCIMB 8711 / NCTC 7292 / S-41).